Here is a 254-residue protein sequence, read N- to C-terminus: Probable membrane transporter protein YjnA (254 aa).

6 consecutive transmembrane segments (helical) span residues 5-25 (IILMGLFVGALVGLTGVGGAA), 75-95 (AIGSIPSASLAIGILHLFPAF), 105-125 (HALGYVLTLVAISIIVRLFLD), 143-163 (ALTILIGVVFGFIVGLTSIGS), 187-207 (IAHAFLLVTAAGILNASFGSV), and 209-229 (YMLAANLLLGSIPGVLIGSHL).

It belongs to the 4-toluene sulfonate uptake permease (TSUP) (TC 2.A.102) family.

It localises to the cell membrane. The chain is Probable membrane transporter protein YjnA (yjnA) from Bacillus subtilis (strain 168).